Reading from the N-terminus, the 348-residue chain is Lysophosphatidic acid receptor 2 (348 aa).

Topologically, residues 1–30 (MGQCYYNETIGFFYNNSGKELSLHWRPKDV) are extracellular. 2 N-linked (GlcNAc...) asparagine glycosylation sites follow: N7 and N15. A helical transmembrane segment spans residues 31–51 (VVVALGLTVSVLVLLTNLLVI). At 52 to 66 (AAIASNRRFHQPIYY) the chain is on the cytoplasmic side. A helical transmembrane segment spans residues 67-87 (LLGNLAAADLFAGMAYLFLMF). Residues 88–104 (HTGPRTARLSIKGWFLR) lie on the Extracellular side of the membrane. A helical membrane pass occupies residues 105–124 (QGLLDTSLTASVATLLAIAV). Topologically, residues 125–144 (ERHRSVMAVQLHSRLPRGRV) are cytoplasmic. The chain crosses the membrane as a helical span at residues 145–165 (VTLIVGVWAAALGLGLLPAHF). Topologically, residues 166 to 185 (WHCLCDLDSCSRMVPLFSRS) are extracellular. Residues 186 to 206 (YLAAWALSSLLVFLLMVAVYT) form a helical membrane-spanning segment. Residues 207-239 (RIFFYVRRRVERMAEHVSCHPRYRETTLSLVKT) lie on the Cytoplasmic side of the membrane. The chain crosses the membrane as a helical span at residues 240-260 (VVIILGAFVVCWTPGQVVLLL). The Extracellular portion of the chain corresponds to 261–270 (DGLDCKSCNV). The helical transmembrane segment at 271–291 (LAVEKYFLLLAEANSLVNAVV) threads the bilayer. Residues 292 to 348 (YSCRDAEMRRTFRRLLCCMCLRWSSHKSARYSASAQTGASTRIMLPENGRPLMDSTL) are Cytoplasmic-facing. C308 carries the S-palmitoyl cysteine lipid modification. The PDZ-binding signature appears at 345-348 (DSTL).

The protein belongs to the G-protein coupled receptor 1 family. Interacts with SLC9A3R2/NHERF2, MAGI3 and PLCB3. Interacts with RALA and GRK2. As to expression, most abundantly expressed in testes, kidney, and embryonic brain. Other organs also express the transcript, including heart, lung, spleen, thymus, stomach, and adult brain. Several have little or no expression, including liver, small intestine, and skeletal muscle.

It is found in the cell surface. Its subcellular location is the cell membrane. In terms of biological role, receptor for lysophosphatidic acid (LPA), a mediator of diverse cellular activities. Seems to be coupled to the G(i)/G(o), G(12)/G(13), and G(q) families of heteromeric G proteins. Plays a key role in phospholipase C-beta (PLC-beta) signaling pathway Stimulates phospholipase C (PLC) activity in a manner that is independent of RALA activation. This is Lysophosphatidic acid receptor 2 from Mus musculus (Mouse).